A 232-amino-acid chain; its full sequence is Ornithine carbamoyltransferase (232 aa).

Carbamoyl phosphate is bound by residues Gln15, Arg39, and 66–69 (HPTQ). L-ornithine contacts are provided by residues Asn99, Asp163, and 167–168 (SM). Carbamoyl phosphate-binding positions include 204–207 (HCLP) and Thr232.

Belongs to the aspartate/ornithine carbamoyltransferase superfamily. OTCase family.

It localises to the cytoplasm. It catalyses the reaction carbamoyl phosphate + L-ornithine = L-citrulline + phosphate + H(+). The protein operates within amino-acid biosynthesis; L-arginine biosynthesis; L-arginine from L-ornithine and carbamoyl phosphate: step 1/3. This Neisseria animalis protein is Ornithine carbamoyltransferase (argF).